Reading from the N-terminus, the 104-residue chain is Small ribosomal subunit protein uS10 (104 aa).

Belongs to the universal ribosomal protein uS10 family. Part of the 30S ribosomal subunit.

Functionally, involved in the binding of tRNA to the ribosomes. The sequence is that of Small ribosomal subunit protein uS10 from Alkaliphilus metalliredigens (strain QYMF).